The following is a 101-amino-acid chain: Integration host factor subunit alpha (101 aa).

This sequence belongs to the bacterial histone-like protein family. Heterodimer of an alpha and a beta chain.

Functionally, this protein is one of the two subunits of integration host factor, a specific DNA-binding protein that functions in genetic recombination as well as in transcriptional and translational control. The chain is Integration host factor subunit alpha from Alkalilimnicola ehrlichii (strain ATCC BAA-1101 / DSM 17681 / MLHE-1).